Consider the following 254-residue polypeptide: Myeloblastin (254 aa).

A signal peptide spans 1–27 (MSGSYPSPKGIHPFLLLALVVGGAVQA). Residues 28-29 (SK) constitute a propeptide that is removed on maturation. In terms of domain architecture, Peptidase S1 spans 30–250 (IVGGHEARPH…YVDWIQNVLR (221 aa)). Cysteine 58 and cysteine 74 are disulfide-bonded. Catalysis depends on charge relay system residues histidine 73 and aspartate 120. 2 N-linked (GlcNAc...) asparagine glycosylation sites follow: asparagine 127 and asparagine 176. 3 disulfides stabilise this stretch: cysteine 154–cysteine 211, cysteine 184–cysteine 190, and cysteine 201–cysteine 226. Residue serine 205 is the Charge relay system of the active site. The propeptide occupies 251-254 (GAEP).

Belongs to the peptidase S1 family. Elastase subfamily. As to quaternary structure, may form dimers. Interacts with CD177; the interaction tethers PRTN3 to the cell surface; the interaction is direct. Interacts with SERPINB1. Interacts with ADGRG3.

The protein resides in the lysosome. Its subcellular location is the secreted. The protein localises to the cell membrane. It is found in the membrane raft. It carries out the reaction Hydrolysis of proteins, including elastin, by preferential cleavage: -Ala-|-Xaa- &gt; -Val-|-Xaa-.. Serine protease that degrades elastin, fibronectin, laminin, vitronectin, and collagen types I, III, and IV (in vitro). By cleaving and activating receptor F2RL1/PAR-2, enhances endothelial cell barrier function and thus vascular integrity during neutrophil transendothelial migration. May play a role in neutrophil transendothelial migration, probably when associated with CD177. Triggers inflammatory processes in neutrophils by interacting with ADGRG3 upstream of F2RL1/PAR2 activation. This is Myeloblastin (Prtn3) from Mus musculus (Mouse).